The primary structure comprises 425 residues: UDP-N-acetylglucosamine 1-carboxyvinyltransferase (425 aa).

22 to 23 contributes to the phosphoenolpyruvate binding site; sequence KN. UDP-N-acetyl-alpha-D-glucosamine is bound at residue Arg-98. Cys-122 serves as the catalytic Proton donor. Cys-122 carries the post-translational modification 2-(S-cysteinyl)pyruvic acid O-phosphothioketal. UDP-N-acetyl-alpha-D-glucosamine-binding positions include 127-131, Asp-313, and Ile-335; that span reads RPVDQ.

Belongs to the EPSP synthase family. MurA subfamily.

The protein localises to the cytoplasm. It catalyses the reaction phosphoenolpyruvate + UDP-N-acetyl-alpha-D-glucosamine = UDP-N-acetyl-3-O-(1-carboxyvinyl)-alpha-D-glucosamine + phosphate. It functions in the pathway cell wall biogenesis; peptidoglycan biosynthesis. Cell wall formation. Adds enolpyruvyl to UDP-N-acetylglucosamine. The polypeptide is UDP-N-acetylglucosamine 1-carboxyvinyltransferase (Xylella fastidiosa (strain 9a5c)).